Here is a 68-residue protein sequence, read N- to C-terminus: Conotoxin ArMMSK-01 (68 aa).

The N-terminal stretch at 1 to 20 (MMSKLGVLLTICMLLFPLTA) is a signal peptide. A propeptide spanning residues 21-51 (LPLDGDQPADRPAERMQDDFISEQHPLFNPI) is cleaved from the precursor. Intrachain disulfides connect C54–C67, C55–C63, and C59–C66. Position 65 is a 4-hydroxyproline (P65).

Belongs to the conotoxin M superfamily. In terms of tissue distribution, expressed by the venom duct.

It is found in the secreted. The sequence is that of Conotoxin ArMMSK-01 from Conus arenatus (Sand-dusted cone).